Here is a 112-residue protein sequence, read N- to C-terminus: MAQGYAWFCCASNSSTRFSNATNFSRVRINTCVCTSNSSRVTKSSFANCACNVCLSLASASCPKSLIPCGRESWICCITCSIFFGFSIIASYFLKFHLLYVILLQIKTFFRD.

Residues 82–104 traverse the membrane as a helical segment; that stretch reads IFFGFSIIASYFLKFHLLYVILL.

The protein localises to the membrane. This is an uncharacterized protein from Pasteurella multocida (strain Pm70).